The primary structure comprises 425 residues: Ribonuclease T2-like (425 aa).

The N-terminal stretch at M1 to A18 is a signal peptide. Disulfide bonds link C32/C51, C40/C99, C50/C175, C107/C167, and C245/C281. A glycan (N-linked (GlcNAc...) asparagine) is linked at N42. The active site involves H92. N-linked (GlcNAc...) asparagine glycosylation is present at N134. Catalysis depends on residues E160 and H164.

This sequence belongs to the RNase T2 family.

It localises to the vacuole lumen. Its subcellular location is the cytoplasm. The enzyme catalyses a ribonucleotidyl-ribonucleotide-RNA + H2O = a 3'-end 3'-phospho-ribonucleotide-RNA + a 5'-end dephospho-ribonucleoside-RNA + H(+). In terms of biological role, rnase which modulates cell survival under stress conditions. Released from the vacuole to the cytoplasm during stress to promote tRNA and rRNA cleavage and to activate separately a downstream pathway that promotes cell death. Involved in cell size, vacuolar morphology and growth at high temperatures and high salt concentration. The polypeptide is Ribonuclease T2-like (RNY1) (Kluyveromyces lactis (strain ATCC 8585 / CBS 2359 / DSM 70799 / NBRC 1267 / NRRL Y-1140 / WM37) (Yeast)).